We begin with the raw amino-acid sequence, 348 residues long: Phosphoribosylformylglycinamidine cyclo-ligase (348 aa).

The protein belongs to the AIR synthase family.

Its subcellular location is the cytoplasm. It carries out the reaction 2-formamido-N(1)-(5-O-phospho-beta-D-ribosyl)acetamidine + ATP = 5-amino-1-(5-phospho-beta-D-ribosyl)imidazole + ADP + phosphate + H(+). It participates in purine metabolism; IMP biosynthesis via de novo pathway; 5-amino-1-(5-phospho-D-ribosyl)imidazole from N(2)-formyl-N(1)-(5-phospho-D-ribosyl)glycinamide: step 2/2. The protein is Phosphoribosylformylglycinamidine cyclo-ligase of Aromatoleum aromaticum (strain DSM 19018 / LMG 30748 / EbN1) (Azoarcus sp. (strain EbN1)).